The sequence spans 249 residues: Probable transcriptional regulatory protein Strop_1792 (249 aa).

Belongs to the TACO1 family.

It is found in the cytoplasm. The protein is Probable transcriptional regulatory protein Strop_1792 of Salinispora tropica (strain ATCC BAA-916 / DSM 44818 / JCM 13857 / NBRC 105044 / CNB-440).